A 604-amino-acid polypeptide reads, in one-letter code: Glucoamylase 1 (604 aa).

An N-terminal signal peptide occupies residues 1-25 (MQLFNLPLKVSFFLVLSYFSLLVSA). The segment at 26-115 (ASIPSSASVQ…EFYIKYEVSG (90 aa)) is adsorption to raw starch. The CBM21 domain occupies 26-130 (ASIPSSASVQ…NNNSANYQVS (105 aa)). Residues 116 to 604 (KTYYDNNNSA…SYAKAGAPAA (489 aa)) form a starch degradation region. The N-linked (GlcNAc...) asparagine glycan is linked to Asn122. A disordered region spans residues 127-164 (YQVSTSKPTTTTATATTTTAPSTSTTTPPSRSEPATFP). Low complexity predominate over residues 130–162 (STSKPTTTTATATTTTAPSTSTTTPPSRSEPAT). N-linked (GlcNAc...) asparagine glycosylation is found at Asn167, Asn230, and Asn236. Trp279 provides a ligand contact to substrate. Catalysis depends on Asp336, which acts as the Proton acceptor. Glu339 functions as the Proton donor in the catalytic mechanism. Residue Asn564 is glycosylated (N-linked (GlcNAc...) asparagine).

The protein belongs to the glycosyl hydrolase 15 family.

The catalysed reaction is Hydrolysis of terminal (1-&gt;4)-linked alpha-D-glucose residues successively from non-reducing ends of the chains with release of beta-D-glucose.. The chain is Glucoamylase 1 from Rhizopus oryzae (Mucormycosis agent).